Reading from the N-terminus, the 223-residue chain is Ribosomal RNA small subunit methyltransferase Nep1 (223 aa).

S-adenosyl-L-methionine-binding positions include Gly181, Gly186, and 199 to 204 (LYREPL).

Belongs to the class IV-like SAM-binding methyltransferase superfamily. RNA methyltransferase NEP1 family. As to quaternary structure, homodimer.

The enzyme catalyses a pseudouridine in rRNA + S-adenosyl-L-methionine = an N(1)-methylpseudouridine in rRNA + S-adenosyl-L-homocysteine + H(+). Functionally, methyltransferase involved in ribosomal biogenesis. Specifically catalyzes the N1-methylation of the pseudouridine corresponding to position 914 in M.jannaschii 16S rRNA. The chain is Ribosomal RNA small subunit methyltransferase Nep1 from Pyrococcus furiosus (strain ATCC 43587 / DSM 3638 / JCM 8422 / Vc1).